The sequence spans 549 residues: Oxygen-dependent choline dehydrogenase (549 aa).

4–33 (DFVIIGSGSAGSAMAYRLSENGRYSVIVIE) contacts FAD. Catalysis depends on histidine 465, which acts as the Proton acceptor.

This sequence belongs to the GMC oxidoreductase family. Requires FAD as cofactor.

It catalyses the reaction choline + A = betaine aldehyde + AH2. The enzyme catalyses betaine aldehyde + NAD(+) + H2O = glycine betaine + NADH + 2 H(+). It participates in amine and polyamine biosynthesis; betaine biosynthesis via choline pathway; betaine aldehyde from choline (cytochrome c reductase route): step 1/1. In terms of biological role, involved in the biosynthesis of the osmoprotectant glycine betaine. Catalyzes the oxidation of choline to betaine aldehyde and betaine aldehyde to glycine betaine at the same rate. The polypeptide is Oxygen-dependent choline dehydrogenase (Brucella suis biovar 1 (strain 1330)).